The following is a 99-amino-acid chain: Cytochrome c-555 (99 aa).

Heme c-binding residues include C23, C26, H27, and M73.

In terms of processing, binds 1 heme c group covalently per subunit.

The sequence is that of Cytochrome c-555 from Prosthecochloris aestuarii.